The chain runs to 288 residues: Elongation factor Ts (288 aa).

An involved in Mg(2+) ion dislocation from EF-Tu region spans residues Thr79–Val82.

Belongs to the EF-Ts family.

It localises to the cytoplasm. Its function is as follows. Associates with the EF-Tu.GDP complex and induces the exchange of GDP to GTP. It remains bound to the aminoacyl-tRNA.EF-Tu.GTP complex up to the GTP hydrolysis stage on the ribosome. The sequence is that of Elongation factor Ts from Ehrlichia canis (strain Jake).